Here is a 177-residue protein sequence, read N- to C-terminus: Peptide methionine sulfoxide reductase MsrA (177 aa).

Cys-15 is an active-site residue.

This sequence belongs to the MsrA Met sulfoxide reductase family.

The catalysed reaction is L-methionyl-[protein] + [thioredoxin]-disulfide + H2O = L-methionyl-(S)-S-oxide-[protein] + [thioredoxin]-dithiol. It catalyses the reaction [thioredoxin]-disulfide + L-methionine + H2O = L-methionine (S)-S-oxide + [thioredoxin]-dithiol. In terms of biological role, has an important function as a repair enzyme for proteins that have been inactivated by oxidation. Catalyzes the reversible oxidation-reduction of methionine sulfoxide in proteins to methionine. The polypeptide is Peptide methionine sulfoxide reductase MsrA (Mycobacterium leprae (strain Br4923)).